The sequence spans 321 residues: Glucokinase (321 aa).

8–13 (GDVGGT) serves as a coordination point for ATP.

The protein belongs to the bacterial glucokinase family.

The protein localises to the cytoplasm. The enzyme catalyses D-glucose + ATP = D-glucose 6-phosphate + ADP + H(+). This is Glucokinase from Tolumonas auensis (strain DSM 9187 / NBRC 110442 / TA 4).